Reading from the N-terminus, the 72-residue chain is Translation initiation factor IF-1 (72 aa).

Residues 1-72 enclose the S1-like domain; that stretch reads MAKEEAIEVE…TRGRITYREK (72 aa).

This sequence belongs to the IF-1 family. Component of the 30S ribosomal translation pre-initiation complex which assembles on the 30S ribosome in the order IF-2 and IF-3, IF-1 and N-formylmethionyl-tRNA(fMet); mRNA recruitment can occur at any time during PIC assembly.

It is found in the cytoplasm. In terms of biological role, one of the essential components for the initiation of protein synthesis. Stabilizes the binding of IF-2 and IF-3 on the 30S subunit to which N-formylmethionyl-tRNA(fMet) subsequently binds. Helps modulate mRNA selection, yielding the 30S pre-initiation complex (PIC). Upon addition of the 50S ribosomal subunit IF-1, IF-2 and IF-3 are released leaving the mature 70S translation initiation complex. The chain is Translation initiation factor IF-1 from Syntrophotalea carbinolica (strain DSM 2380 / NBRC 103641 / GraBd1) (Pelobacter carbinolicus).